We begin with the raw amino-acid sequence, 148 residues long: ATP synthase epsilon chain (148 aa).

This sequence belongs to the ATPase epsilon chain family. As to quaternary structure, F-type ATPases have 2 components, CF(1) - the catalytic core - and CF(0) - the membrane proton channel. CF(1) has five subunits: alpha(3), beta(3), gamma(1), delta(1), epsilon(1). CF(0) has three main subunits: a, b and c.

It is found in the cell inner membrane. Functionally, produces ATP from ADP in the presence of a proton gradient across the membrane. The protein is ATP synthase epsilon chain of Paracoccus denitrificans (strain Pd 1222).